Reading from the N-terminus, the 138-residue chain is Basic phospholipase A2 PLA-N (138 aa).

The first 16 residues, 1–16 (MRTLWIMAVLLVGVEG), serve as a signal peptide directing secretion. 7 disulfide bridges follow: cysteine 42–cysteine 131, cysteine 44–cysteine 60, cysteine 59–cysteine 111, cysteine 65–cysteine 138, cysteine 66–cysteine 104, cysteine 73–cysteine 97, and cysteine 91–cysteine 102. Ca(2+) contacts are provided by tyrosine 43, glycine 45, and glycine 47. The active site involves histidine 63. Position 64 (aspartate 64) interacts with Ca(2+). Aspartate 105 is a catalytic residue.

It belongs to the phospholipase A2 family. Group II subfamily. D49 sub-subfamily. Requires Ca(2+) as cofactor. In terms of tissue distribution, expressed by the venom gland.

The protein localises to the secreted. The catalysed reaction is a 1,2-diacyl-sn-glycero-3-phosphocholine + H2O = a 1-acyl-sn-glycero-3-phosphocholine + a fatty acid + H(+). In terms of biological role, snake venom phospholipase A2 (PLA2) that displays edema-inducing activities, as well as presynaptic neurotoxicity and myotoxicity. PLA2 catalyzes the calcium-dependent hydrolysis of the 2-acyl groups in 3-sn-phosphoglycerides. The sequence is that of Basic phospholipase A2 PLA-N from Protobothrops flavoviridis (Habu).